Consider the following 275-residue polypeptide: Glutamate racemase (275 aa).

Substrate is bound by residues 22 to 23 (DS) and 54 to 55 (YG). The active-site Proton donor/acceptor is the Cys85. Residue 86 to 87 (NT) participates in substrate binding. Catalysis depends on Cys196, which acts as the Proton donor/acceptor. 197 to 198 (TH) contacts substrate.

It belongs to the aspartate/glutamate racemases family.

The enzyme catalyses L-glutamate = D-glutamate. The protein operates within cell wall biogenesis; peptidoglycan biosynthesis. Functionally, provides the (R)-glutamate required for cell wall biosynthesis. This is Glutamate racemase from Pseudomonas syringae pv. tomato (strain ATCC BAA-871 / DC3000).